The primary structure comprises 272 residues: PHD finger protein ALFIN-LIKE 6 (272 aa).

Residues M1 to A23 show a composition bias toward gly residues. Disordered stretches follow at residues M1–P24 and Q162–L218. Positions P168–Q182 are enriched in low complexity. Basic and acidic residues predominate over residues S183–E200. Positions G201–H214 are enriched in acidic residues. The PHD-type zinc finger occupies N216–K268.

This sequence belongs to the Alfin family.

Its subcellular location is the nucleus. Histone-binding component that specifically recognizes H3 tails trimethylated on 'Lys-4' (H3K4me3), which mark transcription start sites of virtually all active genes. This chain is PHD finger protein ALFIN-LIKE 6, found in Oryza sativa subsp. indica (Rice).